The primary structure comprises 4588 residues: Protocadherin Fat 1 (4588 aa).

Positions 1–21 are cleaved as a signal peptide; it reads MGRHLALLLLLLLLFQHFGDS. The Extracellular segment spans residues 22-4181; that stretch reads DGSQRLEQTP…STPWNIGLAE (4160 aa). 2 consecutive Cadherin domains span residues 35-149 and 150-257; these read THLE…RPLF and SPTS…APVI. Asparagine 40 is a glycosylation site (N-linked (GlcNAc...) asparagine). Asparagine 333 carries an N-linked (GlcNAc...) asparagine glycan. Cadherin domains lie at 368–463, 464–569, 570–673, 718–822, 823–927, 928–1034, 1035–1139, 1140–1245, 1246–1357, 1359–1456, 1457–1562, 1563–1667, 1668–1765, 1766–1879, 1880–1979, 1980–2081, 2082–2182, 2183–2283, 2284–2390, 2391–2492, 2493–2596, 2597–2703, 2704–2809, 2810–2918, 2919–3023, 3024–3125, 3126–3230, 3231–3335, 3336–3440, 3441–3545, and 3546–3647; these read EKDV…PPEF, TQTA…TPLF, EKIN…VNLQ, STLP…PPEF, LQES…PPTF, IPPN…PPVF, SSFV…APQT, SEPV…KPQF, LQKF…EPIS, EESF…RPQF, STSK…APWF, TASS…SPKF, TSKE…APVF, MQAE…PPVF, AKPL…HLKF, TQDV…APVF, VNLP…MPVF, EKPF…PPVF, AQQS…PPLF, EQQI…SPAF, LQNE…APQF, RATK…LPKF, SEPF…SPVF, ESSP…PPRF, TAEI…SPVC, EKTL…APEF, SADP…PPVF, EYRE…TPVF, SQDT…APVF, SRGN…PPAI, and LPLE…AIRF. 3 N-linked (GlcNAc...) asparagine glycosylation sites follow: asparagine 660, asparagine 740, and asparagine 791. Asparagine 998 carries N-linked (GlcNAc...) asparagine glycosylation. 2 N-linked (GlcNAc...) asparagine glycosylation sites follow: asparagine 1426 and asparagine 1551. 5 N-linked (GlcNAc...) asparagine glycosylation sites follow: asparagine 1748, asparagine 1864, asparagine 1902, asparagine 1940, and asparagine 1991. N-linked (GlcNAc...) asparagine glycans are attached at residues asparagine 2325 and asparagine 2464. N-linked (GlcNAc...) asparagine glycosylation is found at asparagine 3324, asparagine 3422, asparagine 3444, asparagine 3613, asparagine 3640, and asparagine 3716. Residues 3790–3827 enclose the EGF-like 1 domain; that stretch reads VHHGCEDDPCPEGSECVSDPWEEKHTCVCPSGRFGQCP. Intrachain disulfides connect cysteine 3794-cysteine 3805, cysteine 3799-cysteine 3816, cysteine 3818-cysteine 3826, cysteine 3976-cysteine 4009, cysteine 4017-cysteine 4028, cysteine 4022-cysteine 4038, cysteine 4040-cysteine 4049, cysteine 4056-cysteine 4067, cysteine 4061-cysteine 4076, cysteine 4078-cysteine 4087, cysteine 4093-cysteine 4104, cysteine 4098-cysteine 4113, cysteine 4115-cysteine 4124, cysteine 4131-cysteine 4142, and cysteine 4136-cysteine 4151. In terms of domain architecture, Laminin G-like spans 3829 to 4009; that stretch reads SSSMTLTGNS…EESVDVSPGC (181 aa). EGF-like domains are found at residues 4013-4050, 4052-4088, and 4089-4125; these read ATEDCASNPCQNGGVCNPSPAGGYYCKCSALYIGTHCE, SVNPCSSKPCLYGGTCVVDNGGFVCQCRGLYTGQRCQ, and LSPYCKDEPCKNGGTCFDSLDGAVCQCDSGFRGERCQ. The EGF-like 5; calcium-binding domain occupies 4127–4163; sequence DIDECSGNPCLHGALCENTHGSYHCNCSHEYRGRHCE. Asparagine 4152 carries an N-linked (GlcNAc...) asparagine glycan. Cysteines 4153 and 4162 form a disulfide. A helical transmembrane segment spans residues 4182-4202; sequence GIGIVVFVAGIFLLVVVFVLC. Topologically, residues 4203 to 4588 are cytoplasmic; it reads RKMISRKKKH…PLDSQQHTEV (386 aa). Positions 4204-4214 match the Nuclear localization signal motif; sequence KMISRKKKHQA. Disordered regions lie at residues 4255–4275, 4303–4327, and 4343–4376; these read SYTPSIPSDSRNNLDRNSFEG, SVAPNLPPPPPSNSPSDSDSIQKPS, and LSKKPLEEKPSQPYSARESLSEVQSLSSFQSESC. The segment covering 4256 to 4265 has biased composition (polar residues); that stretch reads YTPSIPSDSR. Positions 4363 to 4374 are enriched in polar residues; sequence SEVQSLSSFQSE. Positions 4378 to 4382 match the PTB-like motif motif; that stretch reads DNGYH. 2 disordered regions span residues 4435–4479 and 4565–4588; these read FPPP…SSSR and ESGDDGHFEEVTIPPLDSQQHTEV.

In terms of assembly, interacts (via the C-terminus 4300-4400 AA) with ATN1. Interacts with RERE. Undergoes proteolytic cleavage. The extracellular domain is cleaved off and the cytoplasmic domain (about 400 AA) shuttles to the nucleus. Expressed in many epithelial and some endothelial and smooth muscle cells.

It is found in the cell membrane. Its subcellular location is the nucleus. In terms of biological role, plays an essential role for cellular polarization, directed cell migration and modulating cell-cell contact. This chain is Protocadherin Fat 1 (FAT1), found in Homo sapiens (Human).